A 636-amino-acid chain; its full sequence is Polyadenylate-binding protein 1 (636 aa).

N-acetylmethionine is present on M1. 4 RRM domains span residues 11–89, 99–175, 191–268, and 294–370; these read ASLY…WSQR, GNIF…RFKS, TNVY…RAQK, and VNLY…LAQR. Residues 166–289 are UNR-binding; sequence RKVFVGRFKS…FEQMKQDRIT (124 aa). Position 299 is an N6-methyllysine (K299). A Phosphoserine modification is found at S315. T319 is modified (phosphothreonine). Omega-N-methylarginine occurs at positions 385, 419, 432, and 436. An omega-N-methylated arginine; by CARM1 mark is found at R455 and R460. An omega-N-methylarginine mark is found at R475 and R481. R493 carries the asymmetric dimethylarginine; alternate modification. At R493 the chain carries Dimethylated arginine; alternate. R493 bears the Omega-N-methylarginine; alternate mark. R506 carries the omega-N-methylarginine modification. K512 carries the N6-acetyllysine modification. An Omega-N-methylarginine modification is found at R518. Residues 542–619 enclose the PABC domain; it reads QEPLTASMLA…AVAVLQAHQA (78 aa).

Belongs to the polyadenylate-binding protein type-1 family. May form homodimers. Component of a multisubunit autoregulatory ribonucleoprotein complex (ARC), at least composed of IGF2BP1, PABPC1 and CSDE1. Directly interacts with IGF2BP1. Part of a complex associated with the FOS mCRD domain and consisting of HNRPD, SYNCRIP, PAIP1 and CSDE1/UNR. Interacts with PAIP1 and PAIP2 (via the PABPC1-interacting motifs PAM1 and PAM2). Interacts with PAIP1 with a 1:1 stoichiometry and with PAIP2 with a 1:2 stoichiometry. The interaction with CSDE1 is direct and RNA-independent. Found in a mRNP complex with YBX2. Interacts with TENT2/GLD2. Identified in the spliceosome C complex. Identified in a mRNP complex, at least composed of DHX9, DDX3X, ELAVL1, HNRNPU, IGF2BP1, ILF3, PABPC1, PCBP2, PTBP2, STAU1, STAU2, SYNCRIP and YBX1. The interaction with DDX3X is direct and RNA-independent. This interaction increases in stressed cells and decreases during cell recovery. Identified in a IGF2BP1-dependent mRNP granule complex containing untranslated mRNAs. Interacts with NXF1/TAP. Interacts with PIWIL1. Interacts with AGO1, AGO2, GSPT1 and GSPT2. Interacts with LARP4B. Interacts (via the second and third RRM domains and the C-terminus) with PAIP2B (via central acidic portion and C-terminus). Forms a complex with LARP1 and SHFL. Interacts with LARP4. Interacts with ZFC3H1 in a RNase-sensitive manner. Interacts with TRIM71 (via NHL repeats) in an RNA-dependent manner. Interacts with TENT5C; the interaction has no effect on TENT5C poly(A) polymerase function. Interacts with G3BP1 and G3BP2. Interacts with ENDOV; the interaction is RNA-dependent and stimulates ENDOV activity. Interacts with UPF1; the interaction is RNA-dependent. Interacts with IGF2BP2 and IGF2BP3. May interact with SETX. Interacts with RBM46. Interacts with PAN3 isoform 1/Pan3L and isoform 3/Pan3S (via N-terminus); interaction with isoform 1 is less efficient than with isoform 3. In terms of processing, phosphorylated by MAPKAPK2. Methylated by CARM1. Arg-493 is dimethylated, probably to asymmetric dimethylarginine.

It localises to the cytoplasm. The protein resides in the stress granule. The protein localises to the nucleus. Its subcellular location is the cell projection. It is found in the lamellipodium. Functionally, binds the poly(A) tail of mRNA, including that of its own transcript, and regulates processes of mRNA metabolism such as pre-mRNA splicing and mRNA stability. Its function in translational initiation regulation can either be enhanced by PAIP1 or repressed by PAIP2. Can probably bind to cytoplasmic RNA sequences other than poly(A) in vivo. Binds to N6-methyladenosine (m6A)-containing mRNAs and contributes to MYC stability by binding to m6A-containing MYC mRNAs. Involved in translationally coupled mRNA turnover. Implicated with other RNA-binding proteins in the cytoplasmic deadenylation/translational and decay interplay of the FOS mRNA mediated by the major coding-region determinant of instability (mCRD) domain. Involved in regulation of nonsense-mediated decay (NMD) of mRNAs containing premature stop codons; for the recognition of premature termination codons (PTC) and initiation of NMD a competitive interaction between UPF1 and PABPC1 with the ribosome-bound release factors is proposed. By binding to long poly(A) tails, may protect them from uridylation by ZCCHC6/ZCCHC11 and hence contribute to mRNA stability. The protein is Polyadenylate-binding protein 1 (Pabpc1) of Rattus norvegicus (Rat).